A 429-amino-acid chain; its full sequence is Adenylosuccinate synthetase (429 aa).

GTP contacts are provided by residues 12 to 18 (GDEGKGK) and 40 to 42 (GHT). Aspartate 13 (proton acceptor) is an active-site residue. Mg(2+)-binding residues include aspartate 13 and glycine 40. IMP is bound by residues 13 to 16 (DEGK), 38 to 41 (NAGH), threonine 129, arginine 143, glutamine 223, threonine 238, and arginine 302. Catalysis depends on histidine 41, which acts as the Proton donor. 298–304 (TVTGRRR) is a binding site for substrate. GTP-binding positions include arginine 304, 330–332 (KLD), and 412–414 (STS).

It belongs to the adenylosuccinate synthetase family. Homodimer. It depends on Mg(2+) as a cofactor.

It localises to the cytoplasm. It carries out the reaction IMP + L-aspartate + GTP = N(6)-(1,2-dicarboxyethyl)-AMP + GDP + phosphate + 2 H(+). It functions in the pathway purine metabolism; AMP biosynthesis via de novo pathway; AMP from IMP: step 1/2. Plays an important role in the de novo pathway of purine nucleotide biosynthesis. Catalyzes the first committed step in the biosynthesis of AMP from IMP. The polypeptide is Adenylosuccinate synthetase (Granulibacter bethesdensis (strain ATCC BAA-1260 / CGDNIH1)).